We begin with the raw amino-acid sequence, 407 residues long: Elongation factor Tu (407 aa).

Residues 10–217 (KPHVNVGTIG…TLDTYIPDPE (208 aa)) enclose the tr-type G domain. The tract at residues 19-26 (GHVDHGKT) is G1. A GTP-binding site is contributed by 19-26 (GHVDHGKT). Thr-26 lines the Mg(2+) pocket. The interval 60–64 (GITIS) is G2. Positions 81–84 (DCPG) are G3. GTP-binding positions include 81–85 (DCPGH) and 136–139 (NKSD). The tract at residues 136 to 139 (NKSD) is G4. The interval 184-186 (SAL) is G5.

It belongs to the TRAFAC class translation factor GTPase superfamily. Classic translation factor GTPase family. EF-Tu/EF-1A subfamily. In terms of assembly, monomer.

It localises to the cytoplasm. The enzyme catalyses GTP + H2O = GDP + phosphate + H(+). Functionally, GTP hydrolase that promotes the GTP-dependent binding of aminoacyl-tRNA to the A-site of ribosomes during protein biosynthesis. The sequence is that of Elongation factor Tu from Marinomonas sp. (strain MWYL1).